A 362-amino-acid polypeptide reads, in one-letter code: Protein RecA (362 aa).

77-84 (GPESSGKT) is an ATP binding site.

The protein belongs to the RecA family.

It localises to the cytoplasm. In terms of biological role, can catalyze the hydrolysis of ATP in the presence of single-stranded DNA, the ATP-dependent uptake of single-stranded DNA by duplex DNA, and the ATP-dependent hybridization of homologous single-stranded DNAs. It interacts with LexA causing its activation and leading to its autocatalytic cleavage. The polypeptide is Protein RecA (Rhizobium leguminosarum bv. trifolii (strain WSM2304)).